The following is a 271-amino-acid chain: Acetyl-coenzyme A carboxylase carboxyl transferase subunit beta (271 aa).

Residues 21–271 (LWIQCPYCKQ…LGDLLALHTA (251 aa)) form the CoA carboxyltransferase N-terminal domain. Zn(2+)-binding residues include Cys-25, Cys-28, Cys-43, and Cys-46. The segment at 25-46 (CPYCKQGSYRESLGNAQVCPHC) adopts a C4-type zinc-finger fold.

This sequence belongs to the AccD/PCCB family. As to quaternary structure, acetyl-CoA carboxylase is a heterohexamer composed of biotin carboxyl carrier protein (AccB), biotin carboxylase (AccC) and two subunits each of ACCase subunit alpha (AccA) and ACCase subunit beta (AccD). Zn(2+) is required as a cofactor.

Its subcellular location is the cytoplasm. It carries out the reaction N(6)-carboxybiotinyl-L-lysyl-[protein] + acetyl-CoA = N(6)-biotinyl-L-lysyl-[protein] + malonyl-CoA. Its pathway is lipid metabolism; malonyl-CoA biosynthesis; malonyl-CoA from acetyl-CoA: step 1/1. Its function is as follows. Component of the acetyl coenzyme A carboxylase (ACC) complex. Biotin carboxylase (BC) catalyzes the carboxylation of biotin on its carrier protein (BCCP) and then the CO(2) group is transferred by the transcarboxylase to acetyl-CoA to form malonyl-CoA. This Lacticaseibacillus paracasei (strain ATCC 334 / BCRC 17002 / CCUG 31169 / CIP 107868 / KCTC 3260 / NRRL B-441) (Lactobacillus paracasei) protein is Acetyl-coenzyme A carboxylase carboxyl transferase subunit beta.